The following is a 337-amino-acid chain: Glutaminase-asparaginase (337 aa).

An Asparaginase/glutaminase domain is found at 10 to 337 (ANVVILATGG…KELQRIFWEY (328 aa)). The active-site Acyl-ester intermediate is the Thr-20. Residues Ser-67 and 100–101 (TD) contribute to the substrate site.

Belongs to the asparaginase 1 family. As to quaternary structure, homotetramer.

It is found in the periplasm. It catalyses the reaction L-glutamine + H2O = L-glutamate + NH4(+). It carries out the reaction L-asparagine + H2O = L-aspartate + NH4(+). The sequence is that of Glutaminase-asparaginase (ansB) from Pseudomonas sp. (strain ATCC 29598 / 7A).